A 320-amino-acid chain; its full sequence is D-alanine--D-alanine ligase (320 aa).

The ATP-grasp domain occupies 120 to 314; sequence SSWFFANSIN…FTNLIAEIIK (195 aa). ATP is bound at residue 147–198; that stretch reads MKRPYVIKPLTQGSSIGVEVIFEEDDFNFADYDFPYGDQVVIERYIKGREFQ. Mg(2+) contacts are provided by glutamate 267, glutamate 281, and asparagine 283.

Belongs to the D-alanine--D-alanine ligase family. The cofactor is Mg(2+). Mn(2+) is required as a cofactor.

It localises to the cytoplasm. It catalyses the reaction 2 D-alanine + ATP = D-alanyl-D-alanine + ADP + phosphate + H(+). It participates in cell wall biogenesis; peptidoglycan biosynthesis. Its function is as follows. Cell wall formation. This chain is D-alanine--D-alanine ligase, found in Rickettsia akari (strain Hartford).